Here is a 458-residue protein sequence, read N- to C-terminus: Tyrosine phenol-lyase (458 aa).

N6-(pyridoxal phosphate)lysine is present on Lys258.

The protein belongs to the beta-eliminating lyase family. Homotetramer. Requires pyridoxal 5'-phosphate as cofactor.

The catalysed reaction is L-tyrosine + H2O = phenol + pyruvate + NH4(+). The chain is Tyrosine phenol-lyase (tpl) from Symbiobacterium thermophilum (strain DSM 24528 / JCM 14929 / IAM 14863 / T).